Consider the following 429-residue polypeptide: MSFDSLPALPLDPLPDAALPTAPRRRQTVSVNVGGVMVGSAHPIVVQSMTNTDTANAEATAIQVAQLARAGSEIVRVTVNTREAAAAVPELVQRLADIGVHVPIVGDFHYNGHLLLREYPETARLLAKYRINPGNVGAGQRHDENFATMIEVAKEFDKPVRIGVNWGSLDQQVLARLMDENAAAGHPKSPTDVTIDAMIVSALDSARFAEELGLGHDKILISVKVSSAPELWQVYRQLAPLCDYPLHLGLTEAGMGMKGIVASSVALAPLLTEGIGDTIRVSLTPEPGAPRKLEVEVAQQILQSLGLRQFLPQVTSCPGCGRTTSSFFQTLAQKIQDFIRESMPEWKAKYPGVEDMQVAVMGCVVNGPGESKHANIGISLPGTGEDPRAPVYQDGKLLTTLKGPRIAEEFQELLEKYVEERYGQGVAQG.

[4Fe-4S] cluster-binding residues include C317, C320, C363, and E370.

It belongs to the IspG family. [4Fe-4S] cluster serves as cofactor.

It catalyses the reaction (2E)-4-hydroxy-3-methylbut-2-enyl diphosphate + oxidized [flavodoxin] + H2O + 2 H(+) = 2-C-methyl-D-erythritol 2,4-cyclic diphosphate + reduced [flavodoxin]. The protein operates within isoprenoid biosynthesis; isopentenyl diphosphate biosynthesis via DXP pathway; isopentenyl diphosphate from 1-deoxy-D-xylulose 5-phosphate: step 5/6. Functionally, converts 2C-methyl-D-erythritol 2,4-cyclodiphosphate (ME-2,4cPP) into 1-hydroxy-2-methyl-2-(E)-butenyl 4-diphosphate. The protein is 4-hydroxy-3-methylbut-2-en-1-yl diphosphate synthase (flavodoxin) of Deinococcus radiodurans (strain ATCC 13939 / DSM 20539 / JCM 16871 / CCUG 27074 / LMG 4051 / NBRC 15346 / NCIMB 9279 / VKM B-1422 / R1).